The primary structure comprises 497 residues: Dihydrolipoyl dehydrogenase (497 aa).

FAD is bound by residues 60-69 (EKEPSLGGTC), Lys-78, Gly-142, and 170-172 (TGS). Cys-69 and Cys-74 form a disulfide bridge. Residues 207–214 (GAGVIGLE), Glu-230, Val-264, and Gly-302 contribute to the NAD(+) site. Residues Asp-343 and 349 to 352 (MLAH) contribute to the FAD site. His-475 functions as the Proton acceptor in the catalytic mechanism.

Belongs to the class-I pyridine nucleotide-disulfide oxidoreductase family. Homodimer. Requires FAD as cofactor.

The protein resides in the cytoplasm. It carries out the reaction N(6)-[(R)-dihydrolipoyl]-L-lysyl-[protein] + NAD(+) = N(6)-[(R)-lipoyl]-L-lysyl-[protein] + NADH + H(+). This Manduca sexta (Tobacco hawkmoth) protein is Dihydrolipoyl dehydrogenase.